The following is a 464-amino-acid chain: Argininosuccinate lyase (464 aa).

It belongs to the lyase 1 family. Argininosuccinate lyase subfamily.

The protein localises to the cytoplasm. The catalysed reaction is 2-(N(omega)-L-arginino)succinate = fumarate + L-arginine. It functions in the pathway amino-acid biosynthesis; L-arginine biosynthesis; L-arginine from L-ornithine and carbamoyl phosphate: step 3/3. This Stutzerimonas stutzeri (strain A1501) (Pseudomonas stutzeri) protein is Argininosuccinate lyase.